A 414-amino-acid polypeptide reads, in one-letter code: Cyclohex-1-ene-1-carbonyl-CoA dehydrogenase (414 aa).

Residue aspartate 124 is the Proton acceptor of the active site. 4 residues coordinate FAD: alanine 157, threonine 158, serine 164, and threonine 190. Cyclohex-1-ene-1-carbonyl-CoA is bound at residue serine 164. Residue serine 164 participates in cyclohexa-1,5-diene-1-carbonyl-CoA binding. Lysine 211, arginine 275, and threonine 396 together coordinate cyclohex-1-ene-1-carbonyl-CoA. Positions 211, 275, and 396 each coordinate cyclohexa-1,5-diene-1-carbonyl-CoA. FAD is bound by residues threonine 398 and glutamine 400. Cyclohex-1-ene-1-carbonyl-CoA is bound at residue arginine 408. Residue arginine 408 participates in cyclohexa-1,5-diene-1-carbonyl-CoA binding.

The protein belongs to the acyl-CoA dehydrogenase family. In terms of assembly, homotetramer. FAD serves as cofactor.

The catalysed reaction is cyclohex-1-ene-1-carbonyl-CoA + oxidized [electron-transfer flavoprotein] + H(+) = cyclohexa-1,5-diene-1-carbonyl-CoA + reduced [electron-transfer flavoprotein]. Its function is as follows. Mediates the conversion of cyclohex-1-ene-1-carbonyl-CoA (Ch1CoA) into (E)-2-cyclohex-1,5-diene-1-carbonyl-CoA in biosynthesis of cyclohexane-1-carboxylate, a by-product produced during fermentation of benzoate and crotonate to acetate. Also able to further convert (E)-2-cyclohex-1,5-diene-1-carbonyl-CoA to benzoyl-CoA. This is Cyclohex-1-ene-1-carbonyl-CoA dehydrogenase from Syntrophus aciditrophicus (strain SB).